The primary structure comprises 487 residues: Aspartyl/glutamyl-tRNA(Asn/Gln) amidotransferase subunit B (487 aa).

It belongs to the GatB/GatE family. GatB subfamily. As to quaternary structure, heterotrimer of A, B and C subunits.

It catalyses the reaction L-glutamyl-tRNA(Gln) + L-glutamine + ATP + H2O = L-glutaminyl-tRNA(Gln) + L-glutamate + ADP + phosphate + H(+). It carries out the reaction L-aspartyl-tRNA(Asn) + L-glutamine + ATP + H2O = L-asparaginyl-tRNA(Asn) + L-glutamate + ADP + phosphate + 2 H(+). In terms of biological role, allows the formation of correctly charged Asn-tRNA(Asn) or Gln-tRNA(Gln) through the transamidation of misacylated Asp-tRNA(Asn) or Glu-tRNA(Gln) in organisms which lack either or both of asparaginyl-tRNA or glutaminyl-tRNA synthetases. The reaction takes place in the presence of glutamine and ATP through an activated phospho-Asp-tRNA(Asn) or phospho-Glu-tRNA(Gln). The chain is Aspartyl/glutamyl-tRNA(Asn/Gln) amidotransferase subunit B from Leptospira biflexa serovar Patoc (strain Patoc 1 / Ames).